Consider the following 183-residue polypeptide: Peptidyl-tRNA hydrolase (183 aa).

Tyrosine 15 contacts tRNA. Histidine 20 functions as the Proton acceptor in the catalytic mechanism. TRNA-binding residues include tyrosine 67 and asparagine 69.

Belongs to the PTH family. In terms of assembly, monomer.

The protein resides in the cytoplasm. The catalysed reaction is an N-acyl-L-alpha-aminoacyl-tRNA + H2O = an N-acyl-L-amino acid + a tRNA + H(+). Functionally, hydrolyzes ribosome-free peptidyl-tRNAs (with 1 or more amino acids incorporated), which drop off the ribosome during protein synthesis, or as a result of ribosome stalling. Catalyzes the release of premature peptidyl moieties from peptidyl-tRNA molecules trapped in stalled 50S ribosomal subunits, and thus maintains levels of free tRNAs and 50S ribosomes. This Chlamydia caviae (strain ATCC VR-813 / DSM 19441 / 03DC25 / GPIC) (Chlamydophila caviae) protein is Peptidyl-tRNA hydrolase.